Consider the following 138-residue polypeptide: Basic phospholipase A2 vaspin B chain (138 aa).

The N-terminal stretch at 1–16 (MRILWIVAVCLIGVEG) is a signal peptide. 7 disulfide bridges follow: C42/C131, C44/C60, C59/C111, C65/C138, C66/C104, C73/C97, and C91/C102. Ca(2+) contacts are provided by Y43, G45, and G47. The active site involves H63. Ca(2+) is bound at residue D64. The active site involves D105.

It belongs to the phospholipase A2 family. Group II subfamily. D49 sub-subfamily. As to quaternary structure, heterodimer of a weakly toxic basic protein having phospholipase A2 activity (B chain (AC Q8JFG1)) and a non-toxic acidic protein functioning as its inhibitor (A chain). The cofactor is Ca(2+). In terms of tissue distribution, expressed by the venom gland.

The protein localises to the secreted. It catalyses the reaction a 1,2-diacyl-sn-glycero-3-phosphocholine + H2O = a 1-acyl-sn-glycero-3-phosphocholine + a fatty acid + H(+). Its function is as follows. Heterodimer: postsynaptic neurotoxin. Functionally, monomer: snake venom phospholipase A2 (PLA2) that shows postsynaptic neurotoxicity. PLA2 catalyzes the calcium-dependent hydrolysis of the 2-acyl groups in 3-sn-phosphoglycerides. The polypeptide is Basic phospholipase A2 vaspin B chain (Vipera aspis aspis (Aspic viper)).